The following is a 161-amino-acid chain: Putative 4-hydroxy-4-methyl-2-oxoglutarate aldolase (161 aa).

Residues glycine 75–leucine 78 and arginine 97 each bind substrate. Aspartate 98 is an a divalent metal cation binding site.

This sequence belongs to the class II aldolase/RraA-like family. As to quaternary structure, homotrimer. The cofactor is a divalent metal cation.

It carries out the reaction 4-hydroxy-4-methyl-2-oxoglutarate = 2 pyruvate. It catalyses the reaction oxaloacetate + H(+) = pyruvate + CO2. In terms of biological role, catalyzes the aldol cleavage of 4-hydroxy-4-methyl-2-oxoglutarate (HMG) into 2 molecules of pyruvate. Also contains a secondary oxaloacetate (OAA) decarboxylase activity due to the common pyruvate enolate transition state formed following C-C bond cleavage in the retro-aldol and decarboxylation reactions. The chain is Putative 4-hydroxy-4-methyl-2-oxoglutarate aldolase from Alkalilimnicola ehrlichii (strain ATCC BAA-1101 / DSM 17681 / MLHE-1).